A 137-amino-acid polypeptide reads, in one-letter code: Small ribosomal subunit protein uS11 (137 aa).

Disordered stretches follow at residues 1-31 (MPPKSRGTGPKKTQKARRRDKKNVPHGAAHI) and 117-137 (TISDVTPQPHNGCRPPKRRRV). Basic residues predominate over residues 12–21 (KTQKARRRDK).

Belongs to the universal ribosomal protein uS11 family. In terms of assembly, part of the 30S ribosomal subunit. Interacts with proteins S7 and S18. Binds to IF-3.

Located on the platform of the 30S subunit, it bridges several disparate RNA helices of the 16S rRNA. Forms part of the Shine-Dalgarno cleft in the 70S ribosome. The sequence is that of Small ribosomal subunit protein uS11 from Rhodococcus jostii (strain RHA1).